The primary structure comprises 748 residues: Structure-specific endonuclease subunit SLX4 (748 aa).

The interval 50–102 (LSSDDDSISTQVKSVTAQKSPITQETTKNDTERNKDVDKSCNPVSTSQPDLGE) is disordered. Polar residues predominate over residues 57-75 (ISTQVKSVTAQKSPITQET). A Phosphothreonine; by ATR and ATM modification is found at Thr-72. Basic and acidic residues predominate over residues 76 to 88 (TKNDTERNKDVDK). At Thr-113 the chain carries Phosphothreonine; by ATR and ATM. Disordered regions lie at residues 215–236 (IKTQNEGNSDKPPRARNNKGEK) and 277–303 (EKSSSSLDNQESSQQRLWTASQLPPEL). Basic and acidic residues predominate over residues 222 to 236 (NSDKPPRARNNKGEK). Residues 277–291 (EKSSSSLDNQESSQQ) are compositionally biased toward low complexity. Ser-289 bears the Phosphoserine; by ATR and ATM mark. The residue at position 319 (Thr-319) is a Phosphothreonine; by ATR and ATM. Residues Ser-329 and Ser-355 each carry the phosphoserine; by ATR and ATM modification.

It belongs to the SLX4 family. As to quaternary structure, forms a heterodimer with SLX1. Interacts with RAD1; catalytic subunit of the RAD1-RAD10 endonuclease. Interacts with RTT107. Phosphorylated by ATR (MEC1) and ATM (TEL1) upon DNA damage. This appears to be required for the function with the RAD1-RAD10 endonuclease.

The protein localises to the nucleus. It is found in the cytoplasm. Its function is as follows. Regulatory subunit that interacts with and increases the activity of different structure-specific endonucleases. Has several distinct roles in protecting genome stability by resolving diverse forms of deleterious DNA structures. Component of the SLX1-SLX4 structure-specific endonuclease that resolves DNA secondary structures generated during DNA repair and recombination. Has endonuclease activity towards branched DNA substrates, introducing single-strand cuts in duplex DNA close to junctions with ss-DNA. Has a preference for simple Y, 5'-flap and replication fork-like structures. It cleaves the strand bearing the 5'-non-homologous arm at the branch site junction and generates ligatable, nicked products from the 5'-flap or replication fork substrates. Plays a critical role in maintaining the integrity of the ribosomal DNA (rDNA) loci, where it has a role in re-starting stalled replication forks. Has Holliday junction resolvase activity in vitro. Interacts with the structure-specific RAD1-RAD10 endonuclease and promotes RAD1-RAD10-dependent 3'-non-homologous tail removal (NHTR) during repair of double-strand breaks by single-strand annealing. SLX4 also promotes recovery from DNA-alkylation-induced replisome stalling during DNA replication by facilitating the error-free mode of lesion bypass. This does not require SLX1 or RAD1-RAD10, but probably RTT107. The protein is Structure-specific endonuclease subunit SLX4 of Saccharomyces cerevisiae (strain YJM789) (Baker's yeast).